A 226-amino-acid polypeptide reads, in one-letter code: 7-cyano-7-deazaguanine synthase (226 aa).

12-22 is a binding site for ATP; the sequence is LSGGLDSATVV. Residues Cys-191, Cys-201, Cys-204, and Cys-207 each contribute to the Zn(2+) site.

This sequence belongs to the QueC family. The cofactor is Zn(2+).

It carries out the reaction 7-carboxy-7-deazaguanine + NH4(+) + ATP = 7-cyano-7-deazaguanine + ADP + phosphate + H2O + H(+). It participates in purine metabolism; 7-cyano-7-deazaguanine biosynthesis. Its function is as follows. Catalyzes the ATP-dependent conversion of 7-carboxy-7-deazaguanine (CDG) to 7-cyano-7-deazaguanine (preQ(0)). The polypeptide is 7-cyano-7-deazaguanine synthase (Pseudomonas syringae pv. tomato (strain ATCC BAA-871 / DC3000)).